Here is a 279-residue protein sequence, read N- to C-terminus: Phycobilisome 34.5 kDa linker polypeptide, phycoerythrocyanin-associated, rod (279 aa).

In terms of domain architecture, PBS-linker spans 2–178; that stretch reads STSVAERLAI…LYRGRANSDN (177 aa). Residues 226-278 form the CpcD-like domain; it reads ARMFIVEAIAGTLNTNVAVRRSRQVYTVPYDRLSATYQEIHKRGGKIVKITPA.

This sequence belongs to the phycobilisome linker protein family.

The protein localises to the cellular thylakoid membrane. Its function is as follows. Rod linker protein, associated with phycoerythrocyanin. Linker polypeptides determine the state of aggregation and the location of the disk-shaped phycobiliprotein units within the phycobilisome and modulate their spectroscopic properties in order to mediate a directed and optimal energy transfer. The protein is Phycobilisome 34.5 kDa linker polypeptide, phycoerythrocyanin-associated, rod (pecC) of Mastigocladus laminosus (Fischerella sp.).